The following is a 179-amino-acid chain: ATP-dependent protease subunit HslV (179 aa).

The active site involves T7. 3 residues coordinate Na(+): A163, C166, and T169.

Belongs to the peptidase T1B family. HslV subfamily. As to quaternary structure, a double ring-shaped homohexamer of HslV is capped on each side by a ring-shaped HslU homohexamer. The assembly of the HslU/HslV complex is dependent on binding of ATP.

The protein resides in the cytoplasm. The enzyme catalyses ATP-dependent cleavage of peptide bonds with broad specificity.. With respect to regulation, allosterically activated by HslU binding. Protease subunit of a proteasome-like degradation complex believed to be a general protein degrading machinery. The polypeptide is ATP-dependent protease subunit HslV (Amoebophilus asiaticus (strain 5a2)).